A 1976-amino-acid chain; its full sequence is DNA-directed RNA polymerase V subunit 1 (1976 aa).

Residues Cys-57, Cys-60, Cys-68, His-71, Cys-98, and Cys-101 each coordinate Zn(2+). Mg(2+) is bound by residues Asp-449, Asp-451, and Asp-453. The tract at residues 751-763 (PYEEMAHSIAARE) is bridging helix. Copy 1 of the repeat occupies 1215–1216 (WG). The tract at residues 1215 to 1693 (WGKRVDVGTG…AKKFPSSGGW (479 aa)) is 18 X 2 AA repeats of [WG]-[GW] repeats. Disordered stretches follow at residues 1272–1291 (EEEM…LGEP), 1298–1718 (DFQN…EDNL), and 1847–1976 (FTKP…QTQT). 2 stretches are compositionally biased toward basic and acidic residues: residues 1281–1291 (SPERDSALGEP) and 1298–1307 (DFQNLHDEGK). Repeat 2 spans residues 1329–1330 (WG). Residues 1332 to 1348 (SKSTGGEANPESNWEKT) are compositionally biased toward polar residues. The segment covering 1349–1371 (TNVEKEDAWSSWNTRKDAQESSK) has biased composition (basic and acidic residues). 15 consecutive repeat copies span residues 1378–1379 (WG), 1415–1416 (WG), 1430–1431 (WG), 1439–1440 (WG), 1447–1448 (WG), 1464–1465 (WG), 1498–1499 (WG), 1528–1529 (WG), 1545–1546 (WG), 1562–1563 (WG), 1596–1597 (WG), 1604–1605 (WG), 1621–1622 (WG), 1638–1639 (WG), and 1641–1642 (WG). The segment covering 1415-1430 (WGHKSVSDKSWDKKNW) has biased composition (basic and acidic residues). Polar residues predominate over residues 1491-1501 (TESNGATWGSS). Basic and acidic residues predominate over residues 1648–1678 (AEDKDTNEDDRNPWVSLKETKSREKDDKERS). A run of 2 repeats spans residues 1680 to 1681 (WG) and 1692 to 1693 (GW). The span at 1869 to 1878 (EQSQPPNQSI) shows a compositional bias: polar residues. The span at 1886–1976 (QTQTQSQSPS…SSQSPSQTQT (91 aa)) shows a compositional bias: low complexity.

Belongs to the RNA polymerase beta' chain family. Component of the RNA polymerase V complex. Interacts with NRPD4, NRPD2A, and (via C-terminus) with AGO4. Interacts with SUVH2. In terms of tissue distribution, mostly expressed in flowers, and, to a lower extent, in leaves. Present in sperm cells.

Its subcellular location is the nucleus. The protein localises to the nucleolus. The enzyme catalyses RNA(n) + a ribonucleoside 5'-triphosphate = RNA(n+1) + diphosphate. In terms of biological role, DNA-dependent RNA polymerase catalyzes the transcription of DNA into RNA using the four ribonucleoside triphosphates as substrates. Largest and catalytic component of RNA polymerase V involved in RNA-directed DNA methylation-dependent (RdDM) silencing of endogenous repeated sequences, including transposable elements. Also required for full erasure of methylation when the RNA trigger is withdrawn. Seems also involved in the synthesis of short-interfering RNAs (siRNA). Essential component of a self-reinforcing loop coupling de novo DNA methylation to siRNA production. Involved in the maintenance of post-transcriptional RNA silencing. The chain is DNA-directed RNA polymerase V subunit 1 (NRPE1) from Arabidopsis thaliana (Mouse-ear cress).